The primary structure comprises 329 residues: Acetyl-coenzyme A carboxylase carboxyl transferase subunit alpha (329 aa).

Residues 40 to 294 form the CoA carboxyltransferase C-terminal domain; the sequence is QLETLAARRR…KTSILRHLTE (255 aa).

Belongs to the AccA family. Acetyl-CoA carboxylase is a heterohexamer composed of biotin carboxyl carrier protein (AccB), biotin carboxylase (AccC) and two subunits each of ACCase subunit alpha (AccA) and ACCase subunit beta (AccD).

Its subcellular location is the cytoplasm. It catalyses the reaction N(6)-carboxybiotinyl-L-lysyl-[protein] + acetyl-CoA = N(6)-biotinyl-L-lysyl-[protein] + malonyl-CoA. It participates in lipid metabolism; malonyl-CoA biosynthesis; malonyl-CoA from acetyl-CoA: step 1/1. In terms of biological role, component of the acetyl coenzyme A carboxylase (ACC) complex. First, biotin carboxylase catalyzes the carboxylation of biotin on its carrier protein (BCCP) and then the CO(2) group is transferred by the carboxyltransferase to acetyl-CoA to form malonyl-CoA. The protein is Acetyl-coenzyme A carboxylase carboxyl transferase subunit alpha of Prochlorococcus marinus (strain SARG / CCMP1375 / SS120).